The following is an 83-amino-acid chain: Small ribosomal subunit protein bS20 (83 aa).

The protein belongs to the bacterial ribosomal protein bS20 family.

Binds directly to 16S ribosomal RNA. The protein is Small ribosomal subunit protein bS20 of Leuconostoc mesenteroides subsp. mesenteroides (strain ATCC 8293 / DSM 20343 / BCRC 11652 / CCM 1803 / JCM 6124 / NCDO 523 / NBRC 100496 / NCIMB 8023 / NCTC 12954 / NRRL B-1118 / 37Y).